The chain runs to 133 residues: Large ribosomal subunit protein uL14 (133 aa).

This sequence belongs to the universal ribosomal protein uL14 family. In terms of assembly, part of the 50S ribosomal subunit. Forms a cluster with proteins L3 and L24e, part of which may contact the 16S rRNA in 2 intersubunit bridges.

Its function is as follows. Binds to 23S rRNA. Forms part of two intersubunit bridges in the 70S ribosome. This is Large ribosomal subunit protein uL14 from Nanoarchaeum equitans (strain Kin4-M).